Here is a 354-residue protein sequence, read N- to C-terminus: Elongation factor Ts, mitochondrial (354 aa).

The N-terminal 47 residues, 1–47, are a transit peptide targeting the mitochondrion; it reads MMRSTLSLLQKCRLPNNNGSLLSFKNNQVVNQTALFSMKSNQQYRFY.

It belongs to the EF-Ts family.

Its subcellular location is the mitochondrion. Functionally, associates with the EF-Tu.GDP complex and induces the exchange of GDP to GTP. It remains bound to the aminoacyl-tRNA.EF-Tu.GTP complex up to the GTP hydrolysis stage on the ribosome. The polypeptide is Elongation factor Ts, mitochondrial (tsfm) (Heterostelium pallidum (strain ATCC 26659 / Pp 5 / PN500) (Cellular slime mold)).